Reading from the N-terminus, the 215-residue chain is Cytochrome b6 (215 aa).

A helical transmembrane segment spans residues Ile-32–Phe-52. Cys-35 provides a ligand contact to heme c. Heme b is bound by residues His-86 and His-100. 3 helical membrane passes run Ala-90 to Phe-110, Leu-116 to Tyr-136, and Leu-186 to Ile-206. Residues His-187 and His-202 each coordinate heme b.

The protein belongs to the cytochrome b family. PetB subfamily. The 4 large subunits of the cytochrome b6-f complex are cytochrome b6, subunit IV (17 kDa polypeptide, PetD), cytochrome f and the Rieske protein, while the 4 small subunits are PetG, PetL, PetM and PetN. The complex functions as a dimer. The cofactor is heme b. Heme c is required as a cofactor.

It localises to the plastid. It is found in the chloroplast thylakoid membrane. Functionally, component of the cytochrome b6-f complex, which mediates electron transfer between photosystem II (PSII) and photosystem I (PSI), cyclic electron flow around PSI, and state transitions. The chain is Cytochrome b6 from Chara vulgaris (Common stonewort).